Reading from the N-terminus, the 170-residue chain is uncharacterized protein (170 aa).

Residues 15–81 adopt a coiled-coil conformation; it reads EAFDEKAEKE…EREKSKSAVS (67 aa). Over residues 20–77 the composition is skewed to basic and acidic residues; it reads KAEKEKVEKEKALKEKTEKEKAEKEKAEKEKVEKEKAEKEKAAKEKAAKEKAEREKSK. Positions 20–95 are disordered; it reads KAEKEKVEKE…NQNSNKGNVE (76 aa). The segment covering 78–92 has biased composition (polar residues); the sequence is SAVSPATTNQNSNKG. The helical transmembrane segment at 98–118 threads the bilayer; that stretch reads VAIGVLAGGAVTGVAVGGAYL.

The protein resides in the membrane. This is an uncharacterized protein from Dictyostelium discoideum (Social amoeba).